The sequence spans 342 residues: Phosphate acyltransferase (342 aa).

Belongs to the PlsX family. As to quaternary structure, homodimer. Probably interacts with PlsY.

It is found in the cytoplasm. The catalysed reaction is a fatty acyl-[ACP] + phosphate = an acyl phosphate + holo-[ACP]. It functions in the pathway lipid metabolism; phospholipid metabolism. In terms of biological role, catalyzes the reversible formation of acyl-phosphate (acyl-PO(4)) from acyl-[acyl-carrier-protein] (acyl-ACP). This enzyme utilizes acyl-ACP as fatty acyl donor, but not acyl-CoA. In Shewanella woodyi (strain ATCC 51908 / MS32), this protein is Phosphate acyltransferase.